A 628-amino-acid polypeptide reads, in one-letter code: (-)-beta-pinene synthase 1, chloroplastic (628 aa).

The N-terminal 51 residues, 1–51 (MDLISVLPSASKSCVCLHKPLSSSTHKLKPFCRTIRILGMPRPRKSVLMVS), are a transit peptide targeting the chloroplast. Mg(2+) contacts are provided by Asp379, Asp383, and Asp531. Residues 379–383 (DDMYD) carry the DDXXD motif motif.

It belongs to the terpene synthase family. Tpsd subfamily. Requires Mg(2+) as cofactor. Mn(2+) serves as cofactor.

The protein localises to the plastid. It is found in the chloroplast. It carries out the reaction (2E)-geranyl diphosphate = (1S,5S)-beta-pinene + diphosphate. It catalyses the reaction (2E)-geranyl diphosphate = (1S,5S)-alpha-pinene + diphosphate. It participates in terpene metabolism; oleoresin biosynthesis. Its pathway is secondary metabolite biosynthesis; terpenoid biosynthesis. Its function is as follows. Monoterpene synthase (TPS) involved in the biosynthesis of monoterpene natural products included in conifer oleoresin secretions and volatile emissions; these compounds contribute to biotic and abiotic stress defense against herbivores and pathogens. Catalyzes the conversion of (2E)-geranyl diphosphate (GPP) to (-)-beta-pinene and, to a lower extent, to (-)-alpha-pinene. The polypeptide is (-)-beta-pinene synthase 1, chloroplastic (Pinus banksiana (Jack pine)).